The chain runs to 277 residues: 2-dehydro-3-deoxyphosphooctonate aldolase (277 aa).

The protein belongs to the KdsA family.

The protein localises to the cytoplasm. The enzyme catalyses D-arabinose 5-phosphate + phosphoenolpyruvate + H2O = 3-deoxy-alpha-D-manno-2-octulosonate-8-phosphate + phosphate. It participates in carbohydrate biosynthesis; 3-deoxy-D-manno-octulosonate biosynthesis; 3-deoxy-D-manno-octulosonate from D-ribulose 5-phosphate: step 2/3. It functions in the pathway bacterial outer membrane biogenesis; lipopolysaccharide biosynthesis. The polypeptide is 2-dehydro-3-deoxyphosphooctonate aldolase (Hydrogenovibrio crunogenus (strain DSM 25203 / XCL-2) (Thiomicrospira crunogena)).